Reading from the N-terminus, the 459-residue chain is tRNA modification GTPase MnmE (459 aa).

Residues R25, E87, and R126 each coordinate (6S)-5-formyl-5,6,7,8-tetrahydrofolate. Positions 221–380 (GLKVAIVGRP…LETAILEIVQ (160 aa)) constitute a TrmE-type G domain. N231 serves as a coordination point for K(+). GTP contacts are provided by residues 231 to 236 (NVGKSS), 250 to 256 (TDLPGTT), and 275 to 278 (DTAG). Residue S235 participates in Mg(2+) binding. K(+)-binding residues include T250, L252, and T255. T256 is a binding site for Mg(2+). K459 is a (6S)-5-formyl-5,6,7,8-tetrahydrofolate binding site.

This sequence belongs to the TRAFAC class TrmE-Era-EngA-EngB-Septin-like GTPase superfamily. TrmE GTPase family. In terms of assembly, homodimer. Heterotetramer of two MnmE and two MnmG subunits. The cofactor is K(+).

It localises to the cytoplasm. In terms of biological role, exhibits a very high intrinsic GTPase hydrolysis rate. Involved in the addition of a carboxymethylaminomethyl (cmnm) group at the wobble position (U34) of certain tRNAs, forming tRNA-cmnm(5)s(2)U34. The polypeptide is tRNA modification GTPase MnmE (Nostoc sp. (strain PCC 7120 / SAG 25.82 / UTEX 2576)).